Consider the following 434-residue polypeptide: Serine--tRNA ligase (434 aa).

241 to 243 (TAE) provides a ligand contact to L-serine. 272 to 274 (RSE) is a binding site for ATP. Residue E295 coordinates L-serine. 359 to 362 (EISS) contributes to the ATP binding site. Residue S395 coordinates L-serine.

Belongs to the class-II aminoacyl-tRNA synthetase family. Type-1 seryl-tRNA synthetase subfamily. In terms of assembly, homodimer. The tRNA molecule binds across the dimer.

The protein resides in the cytoplasm. It catalyses the reaction tRNA(Ser) + L-serine + ATP = L-seryl-tRNA(Ser) + AMP + diphosphate + H(+). It carries out the reaction tRNA(Sec) + L-serine + ATP = L-seryl-tRNA(Sec) + AMP + diphosphate + H(+). It functions in the pathway aminoacyl-tRNA biosynthesis; selenocysteinyl-tRNA(Sec) biosynthesis; L-seryl-tRNA(Sec) from L-serine and tRNA(Sec): step 1/1. Catalyzes the attachment of serine to tRNA(Ser). Is also able to aminoacylate tRNA(Sec) with serine, to form the misacylated tRNA L-seryl-tRNA(Sec), which will be further converted into selenocysteinyl-tRNA(Sec). The protein is Serine--tRNA ligase of Glaesserella parasuis serovar 5 (strain SH0165) (Haemophilus parasuis).